Reading from the N-terminus, the 1359-residue chain is Tripeptidyl-peptidase 2 (1359 aa).

The interval 45-81 is disordered; that stretch reads AASTTTRGGPSPSAGVAPRAMPSSSSSPPSAAEGTTA. Residues 64–81 are compositionally biased toward low complexity; that stretch reads AMPSSSSSPPSAAEGTTA. Residues 102 to 600 enclose the Peptidase S8 domain; it reads EIGVDRFLAA…HGLLQVDRAF (499 aa). Catalysis depends on charge relay system residues aspartate 126, histidine 353, and serine 539.

Belongs to the peptidase S8 family.

It catalyses the reaction Release of an N-terminal tripeptide from a polypeptide.. Serine protease that may function in the proteasome pathway. The sequence is that of Tripeptidyl-peptidase 2 (TPP2) from Oryza sativa subsp. japonica (Rice).